A 211-amino-acid polypeptide reads, in one-letter code: Large ribosomal subunit protein eL13 (211 aa).

Lysine 16 bears the N6-acetyllysine mark. Serine 52, serine 77, and serine 106 each carry phosphoserine. Glycyl lysine isopeptide (Lys-Gly) (interchain with G-Cter in SUMO2) cross-links involve residues lysine 123 and lysine 145. Lysine 174 participates in a covalent cross-link: Glycyl lysine isopeptide (Lys-Gly) (interchain with G-Cter in SUMO1); alternate. Residues lysine 174 and lysine 177 each participate in a glycyl lysine isopeptide (Lys-Gly) (interchain with G-Cter in SUMO2); alternate cross-link. Position 177 is an N6-acetyllysine; alternate (lysine 177).

The protein belongs to the eukaryotic ribosomal protein eL13 family. Component of the 60S large ribosomal subunit (LSU).

Its subcellular location is the cytoplasm. In terms of biological role, component of the ribosome, a large ribonucleoprotein complex responsible for the synthesis of proteins in the cell. The small ribosomal subunit (SSU) binds messenger RNAs (mRNAs) and translates the encoded message by selecting cognate aminoacyl-transfer RNA (tRNA) molecules. The large subunit (LSU) contains the ribosomal catalytic site termed the peptidyl transferase center (PTC), which catalyzes the formation of peptide bonds, thereby polymerizing the amino acids delivered by tRNAs into a polypeptide chain. The nascent polypeptides leave the ribosome through a tunnel in the LSU and interact with protein factors that function in enzymatic processing, targeting, and the membrane insertion of nascent chains at the exit of the ribosomal tunnel. As part of the LSU, it is probably required for its formation and the maturation of rRNAs. Plays a role in bone development. In Rattus norvegicus (Rat), this protein is Large ribosomal subunit protein eL13 (Rpl13).